An 86-amino-acid polypeptide reads, in one-letter code: Small ribosomal subunit protein uS15c (86 aa).

The protein belongs to the universal ribosomal protein uS15 family. In terms of assembly, part of the 30S ribosomal subunit.

Its subcellular location is the plastid. The protein localises to the chloroplast. This chain is Small ribosomal subunit protein uS15c (rps15), found in Cryptomeria japonica (Japanese cedar).